Here is a 238-residue protein sequence, read N- to C-terminus: uncharacterized protein (238 aa).

A compositionally biased stretch (basic residues) spans 1-10 (MARGQNIRKR). Disordered regions lie at residues 1-26 (MARG…IGIH) and 195-238 (LNTS…YDSF).

This sequence belongs to the asfivirus DP238L family.

This is an uncharacterized protein from Ornithodoros (relapsing fever ticks).